Here is a 168-residue protein sequence, read N- to C-terminus: Photosystem I assembly protein Ycf3 (168 aa).

3 TPR repeats span residues 35 to 68, 72 to 105, and 120 to 153; these read AFTY…EIDP, SYIL…NPFL, and GEQA…TPGN.

Belongs to the Ycf3 family.

The protein localises to the plastid. The protein resides in the chloroplast thylakoid membrane. Essential for the assembly of the photosystem I (PSI) complex. May act as a chaperone-like factor to guide the assembly of the PSI subunits. The chain is Photosystem I assembly protein Ycf3 from Calycanthus floridus var. glaucus (Eastern sweetshrub).